A 37-amino-acid chain; its full sequence is Large ribosomal subunit protein bL36c (37 aa).

It belongs to the bacterial ribosomal protein bL36 family.

It localises to the plastid. The protein localises to the chloroplast. The sequence is that of Large ribosomal subunit protein bL36c from Chaetosphaeridium globosum (Charophycean green alga).